The following is a 484-amino-acid chain: Glycogen synthase (484 aa).

Lys15 lines the ADP-alpha-D-glucose pocket.

Belongs to the glycosyltransferase 1 family. Bacterial/plant glycogen synthase subfamily.

The catalysed reaction is [(1-&gt;4)-alpha-D-glucosyl](n) + ADP-alpha-D-glucose = [(1-&gt;4)-alpha-D-glucosyl](n+1) + ADP + H(+). It functions in the pathway glycan biosynthesis; glycogen biosynthesis. Synthesizes alpha-1,4-glucan chains using ADP-glucose. This is Glycogen synthase from Geotalea uraniireducens (strain Rf4) (Geobacter uraniireducens).